The primary structure comprises 391 residues: Succinate--CoA ligase [ADP-forming] subunit beta (391 aa).

The ATP-grasp domain occupies 9 to 237 (RDLFEKHGVP…RATTDPLELR (229 aa)). ATP-binding positions include lysine 46, 53–55 (GRG), alanine 95, and glutamate 100. 2 residues coordinate Mg(2+): asparagine 192 and aspartate 206. Substrate contacts are provided by residues asparagine 257 and 320-322 (GIT).

Belongs to the succinate/malate CoA ligase beta subunit family. As to quaternary structure, heterotetramer of two alpha and two beta subunits. Requires Mg(2+) as cofactor.

It carries out the reaction succinate + ATP + CoA = succinyl-CoA + ADP + phosphate. It catalyses the reaction GTP + succinate + CoA = succinyl-CoA + GDP + phosphate. It functions in the pathway carbohydrate metabolism; tricarboxylic acid cycle; succinate from succinyl-CoA (ligase route): step 1/1. Functionally, succinyl-CoA synthetase functions in the citric acid cycle (TCA), coupling the hydrolysis of succinyl-CoA to the synthesis of either ATP or GTP and thus represents the only step of substrate-level phosphorylation in the TCA. The beta subunit provides nucleotide specificity of the enzyme and binds the substrate succinate, while the binding sites for coenzyme A and phosphate are found in the alpha subunit. This Cutibacterium acnes (strain DSM 16379 / KPA171202) (Propionibacterium acnes) protein is Succinate--CoA ligase [ADP-forming] subunit beta.